Here is a 416-residue protein sequence, read N- to C-terminus: Tryptophan synthase beta chain (416 aa).

Lysine 109 carries the post-translational modification N6-(pyridoxal phosphate)lysine.

The protein belongs to the TrpB family. Tetramer of two alpha and two beta chains. It depends on pyridoxal 5'-phosphate as a cofactor.

The catalysed reaction is (1S,2R)-1-C-(indol-3-yl)glycerol 3-phosphate + L-serine = D-glyceraldehyde 3-phosphate + L-tryptophan + H2O. The protein operates within amino-acid biosynthesis; L-tryptophan biosynthesis; L-tryptophan from chorismate: step 5/5. In terms of biological role, the beta subunit is responsible for the synthesis of L-tryptophan from indole and L-serine. This chain is Tryptophan synthase beta chain, found in Mesorhizobium japonicum (strain LMG 29417 / CECT 9101 / MAFF 303099) (Mesorhizobium loti (strain MAFF 303099)).